Here is an 860-residue protein sequence, read N- to C-terminus: DNA mismatch repair protein MutS (860 aa).

Residue Gly-608–Ser-615 participates in ATP binding.

This sequence belongs to the DNA mismatch repair MutS family.

In terms of biological role, this protein is involved in the repair of mismatches in DNA. It is possible that it carries out the mismatch recognition step. This protein has a weak ATPase activity. This is DNA mismatch repair protein MutS from Borrelia turicatae (strain 91E135).